A 156-amino-acid polypeptide reads, in one-letter code: Small ribosomal subunit protein uS7 (156 aa).

The protein belongs to the universal ribosomal protein uS7 family. In terms of assembly, part of the 30S ribosomal subunit. Contacts proteins S9 and S11.

One of the primary rRNA binding proteins, it binds directly to 16S rRNA where it nucleates assembly of the head domain of the 30S subunit. Is located at the subunit interface close to the decoding center, probably blocks exit of the E-site tRNA. The polypeptide is Small ribosomal subunit protein uS7 (Rhizobium rhizogenes (strain K84 / ATCC BAA-868) (Agrobacterium radiobacter)).